The chain runs to 380 residues: Septin homolog spn6 (380 aa).

In terms of domain architecture, Septin-type G spans 27–297; sequence KECGLTIMLC…ERYRREQLTN (271 aa). The G1 motif stretch occupies residues 37–44; it reads GASGTGKT. GTP is bound by residues 37-44, Thr72, Gly98, 177-185, and Arg246; these read GASGTGKT and KADTFTTPE. The G3 motif stretch occupies residues 95–98; the sequence is DTPG. The segment at 176–179 is G4 motif; the sequence is AKAD. A coiled-coil region spans residues 304–380; that stretch reads KLKKEHYERL…KSYKGRGHKK (77 aa).

The protein belongs to the TRAFAC class TrmE-Era-EngA-EngB-Septin-like GTPase superfamily. Septin GTPase family. Component of the sporulation-specific septin complex composed of at least spn2, spn5, spn6 and spn7.

It localises to the cytoplasm. It is found in the forespore membrane. In terms of biological role, septin-like protein involved in the correct orientation of forespore membrane extension during sporulation. The polypeptide is Septin homolog spn6 (spn6) (Schizosaccharomyces pombe (strain 972 / ATCC 24843) (Fission yeast)).